The chain runs to 185 residues: AP-3 complex subunit sigma (185 aa).

This sequence belongs to the adaptor complexes small subunit family. In terms of assembly, adaptor protein complex 3 (AP-3) is a heterotetramer composed of 2 large adaptins (APL5 and APL6), a medium adaptin (APM3) and a small adaptin (APS3).

The protein resides in the golgi apparatus. Its subcellular location is the cytoplasmic vesicle membrane. Part of the AP-3 complex, an adaptor-related complex which is not clathrin-associated. The complex is associated with the Golgi region as well as more peripheral structures. It facilitates the budding of vesicles from the Golgi membrane and may be directly involved in trafficking to the vacuole. The polypeptide is AP-3 complex subunit sigma (APS3) (Eremothecium gossypii (strain ATCC 10895 / CBS 109.51 / FGSC 9923 / NRRL Y-1056) (Yeast)).